Consider the following 656-residue polypeptide: tRNA 5-methylaminomethyl-2-thiouridine biosynthesis bifunctional protein MnmC (656 aa).

The interval 1–236 is tRNA (mnm(5)s(2)U34)-methyltransferase; that stretch reads MTDPLIPAVL…KRAMLVGHFA (236 aa). Positions 260–656 are FAD-dependent cmnm(5)s(2)U34 oxidoreductase; the sequence is IGAGLAGCAV…LRALRQGAVS (397 aa).

This sequence in the N-terminal section; belongs to the methyltransferase superfamily. tRNA (mnm(5)s(2)U34)-methyltransferase family. The protein in the C-terminal section; belongs to the DAO family. It depends on FAD as a cofactor.

It localises to the cytoplasm. It catalyses the reaction 5-aminomethyl-2-thiouridine(34) in tRNA + S-adenosyl-L-methionine = 5-methylaminomethyl-2-thiouridine(34) in tRNA + S-adenosyl-L-homocysteine + H(+). Catalyzes the last two steps in the biosynthesis of 5-methylaminomethyl-2-thiouridine (mnm(5)s(2)U) at the wobble position (U34) in tRNA. Catalyzes the FAD-dependent demodification of cmnm(5)s(2)U34 to nm(5)s(2)U34, followed by the transfer of a methyl group from S-adenosyl-L-methionine to nm(5)s(2)U34, to form mnm(5)s(2)U34. This Paraburkholderia phytofirmans (strain DSM 17436 / LMG 22146 / PsJN) (Burkholderia phytofirmans) protein is tRNA 5-methylaminomethyl-2-thiouridine biosynthesis bifunctional protein MnmC.